A 767-amino-acid polypeptide reads, in one-letter code: MAKLHHLGFPRIGNKRQLKFALEKFWGGELSEQQLQTSAADLRQQNWLDQQDLALDLYTVGDFSLYDQVLDMSFLVGNIPSRAKQSEQDNSLDNYFRVARGRSQPQECCAASHGQSGESQAGEMTKWFNTNYHYIVPEFDAQTTFLLNAKQLLLQIEALQKINKNVKPVIIGPVTYLWLGKEKDNSQKLTLLPELLEVYAELLALFAEKNITWVQIDEPILVLEIPKQWQEALQSSYQKLGQSKVKLLLTTYFGELKNNLKLACELPIAGLHLDAVNAPHEIDSAIDYLGTDKILSLGIINACNIWKTDLNQTLNQLLPIHQKLQDRLWLAPSSSLLHVPIDLNNEDKLDYEVKSWLAFAVQKLQELSLIGRALNDGLSSVEAAFTYNKLCIENRRQSPQVHKQDIKSKVLNITPELGQRNLAIKQREALQQSYLNLPSYPTTTIGSFPQTSDIRQLRQAKRLGDINEEQYKKSIKESIEFCINEQDQLGLDVLVHGEAERNDMVEYFGELLDGFVFTQFAWVQSYGSRCVKPPILFGDVSRPKAMTVEWSSYAQSLTEKKVKGMLTGPVTILNWSFVRDDQPLQTTCMQIALAIREEVLDLEKAGINIIQIDEAALREKLPLHRSQWQQYLNWAIAAFRLCANGVNDKTQIHTHMCYSEFNDIIAAIAQMDADVITIETSRSDMVLLDVFEAFSYPNGIGPGVYDIHSPNIPDVEQMVSLMKKAALRIPAEQLWVNPDCGLKTRRWEEVKPALLNMVAAAKKLRAS.

Residue Lys126 participates in 5-methyltetrahydropteroyltri-L-glutamate binding. Residues 445-447 (IGS) and Glu498 each bind L-homocysteine. L-methionine-binding positions include 445–447 (IGS) and Glu498. 5-methyltetrahydropteroyltri-L-glutamate-binding positions include 529–530 (RC) and Trp575. Asp613 is an L-homocysteine binding site. Asp613 is a binding site for L-methionine. Glu619 serves as a coordination point for 5-methyltetrahydropteroyltri-L-glutamate. The Zn(2+) site is built by His655, Cys657, and Glu679. The Proton donor role is filled by His708. Cys740 contacts Zn(2+).

Belongs to the vitamin-B12 independent methionine synthase family. Requires Zn(2+) as cofactor.

It carries out the reaction 5-methyltetrahydropteroyltri-L-glutamate + L-homocysteine = tetrahydropteroyltri-L-glutamate + L-methionine. The protein operates within amino-acid biosynthesis; L-methionine biosynthesis via de novo pathway; L-methionine from L-homocysteine (MetE route): step 1/1. Functionally, catalyzes the transfer of a methyl group from 5-methyltetrahydrofolate to homocysteine resulting in methionine formation. In Psychromonas ingrahamii (strain DSM 17664 / CCUG 51855 / 37), this protein is 5-methyltetrahydropteroyltriglutamate--homocysteine methyltransferase.